A 275-amino-acid polypeptide reads, in one-letter code: 3-methyl-2-oxobutanoate hydroxymethyltransferase (275 aa).

2 residues coordinate Mg(2+): D55 and D94. Residues 55-56 (DS), D94, and K122 each bind 3-methyl-2-oxobutanoate. E124 lines the Mg(2+) pocket. Residue E191 is the Proton acceptor of the active site.

This sequence belongs to the PanB family. In terms of assembly, homodecamer; pentamer of dimers. Mg(2+) is required as a cofactor.

It is found in the cytoplasm. The enzyme catalyses 3-methyl-2-oxobutanoate + (6R)-5,10-methylene-5,6,7,8-tetrahydrofolate + H2O = 2-dehydropantoate + (6S)-5,6,7,8-tetrahydrofolate. It participates in cofactor biosynthesis; (R)-pantothenate biosynthesis; (R)-pantoate from 3-methyl-2-oxobutanoate: step 1/2. Its function is as follows. Catalyzes the reversible reaction in which hydroxymethyl group from 5,10-methylenetetrahydrofolate is transferred onto alpha-ketoisovalerate to form ketopantoate. The protein is 3-methyl-2-oxobutanoate hydroxymethyltransferase of Marinomonas sp. (strain MWYL1).